The primary structure comprises 320 residues: Transcription termination/antitermination protein NusG (320 aa).

The protein belongs to the NusG family.

Functionally, participates in transcription elongation, termination and antitermination. In Mycoplasma pneumoniae (strain ATCC 29342 / M129 / Subtype 1) (Mycoplasmoides pneumoniae), this protein is Transcription termination/antitermination protein NusG.